Consider the following 431-residue polypeptide: Gamma-glutamyl phosphate reductase (431 aa).

The protein belongs to the gamma-glutamyl phosphate reductase family.

The protein localises to the cytoplasm. It carries out the reaction L-glutamate 5-semialdehyde + phosphate + NADP(+) = L-glutamyl 5-phosphate + NADPH + H(+). It functions in the pathway amino-acid biosynthesis; L-proline biosynthesis; L-glutamate 5-semialdehyde from L-glutamate: step 2/2. Its function is as follows. Catalyzes the NADPH-dependent reduction of L-glutamate 5-phosphate into L-glutamate 5-semialdehyde and phosphate. The product spontaneously undergoes cyclization to form 1-pyrroline-5-carboxylate. In Synechococcus elongatus (strain ATCC 33912 / PCC 7942 / FACHB-805) (Anacystis nidulans R2), this protein is Gamma-glutamyl phosphate reductase.